A 1216-amino-acid polypeptide reads, in one-letter code: Histone-lysine N-methyltransferase SETDB1-B (1216 aa).

Residues 38 to 61 (KADLEQLQEWVEQREKEVADIDAL) adopt a coiled-coil conformation. 2 Tudor domains span residues 266–329 (RLFV…LKKT) and 356–412 (LLKP…NLKM). The tract at residues 417-513 (SQEKKMAGQQ…QGMPSDLQPK (97 aa)) is disordered. A compositionally biased stretch (pro residues) spans 467–478 (PVAPQPAGPPQP). Residues 482-498 (ESPSFKSQMAKKSTGQL) show a composition bias toward polar residues. Positions 595–666 (HRGRNPLLTP…EMFCLDPYVL (72 aa)) constitute an MBD domain. The 74-residue stretch at 728–801 (VGCDCTDGCR…MCTNRLVQHG (74 aa)) folds into the Pre-SET domain. 9 residues coordinate Zn(2+): Cys-730, Cys-732, Cys-736, Cys-742, Cys-744, Cys-782, Cys-786, Cys-788, and Cys-793. In terms of domain architecture, SET spans 804 to 1179 (VRLQLFKTQN…AGTELTWDYN (376 aa)). S-adenosyl-L-methionine contacts are provided by residues 814-816 (KGW), Asp-852, and Tyr-854. Disordered stretches follow at residues 892 to 944 (LPAS…DTFV), 961 to 1057 (RRQA…KTQA), and 1081 to 1108 (KSGGGGAGGGGSGPSHGHGGGGGDNGPK). Positions 918–940 (DSSEESDDEKDDDSNEDDSDSSD) are enriched in acidic residues. Basic and acidic residues-rich tracts occupy residues 966–976 (GLKEESQDSKD) and 983–997 (GEDRKPPHMPEETGK). Over residues 1003-1016 (WLTNQSSTSANQSV) the composition is skewed to polar residues. 2 stretches are compositionally biased toward basic and acidic residues: residues 1020–1029 (GGIKTEKKDV) and 1046–1055 (DDNKEREKKT). Over residues 1082–1105 (SGGGGAGGGGSGPSHGHGGGGGDN) the composition is skewed to gly residues. S-adenosyl-L-methionine-binding positions include Arg-1133 and 1136–1137 (NH). Positions 1139, 1192, 1194, and 1199 each coordinate Zn(2+). In terms of domain architecture, Post-SET spans 1188 to 1204 (KELLCCCGSTECRGRLL).

This sequence belongs to the class V-like SAM-binding methyltransferase superfamily. Histone-lysine methyltransferase family. Suvar3-9 subfamily.

The protein resides in the nucleus. The protein localises to the chromosome. It carries out the reaction L-lysyl(4)-[histone H3] + 3 S-adenosyl-L-methionine = N(6),N(6),N(6)-trimethyl-L-lysyl(4)-[histone H3] + 3 S-adenosyl-L-homocysteine + 3 H(+). Its function is as follows. Histone methyltransferase that specifically trimethylates 'Lys-9' of histone H3. H3 'Lys-9' trimethylation represents a specific tag for epigenetic transcriptional repression by recruiting HP1 (CBX1, CBX3 and/or CBX5) proteins to methylated histones. Mainly functions in euchromatin regions, thereby playing a central role in the silencing of euchromatic genes. H3 'Lys-9' trimethylation is coordinated with DNA methylation. Plays a role in promoter hypermethylation and transcriptional silencing of tumor suppressor genes (TSGs) or other tumor-related genes. Also required to maintain a transcriptionally repressive state of genes in undifferentiated embryonic stem cells (ESCs). Associates at promoter regions of tumor suppressor genes (TSGs) leading to their gene silencing. The protein is Histone-lysine N-methyltransferase SETDB1-B (setdb1b) of Danio rerio (Zebrafish).